Consider the following 319-residue polypeptide: Thioredoxin reductase (319 aa).

36–43 (TGINKGGQ) contributes to the FAD binding site. A disulfide bond links C136 and C139. 288–297 (DVIDHVYRQA) contributes to the FAD binding site.

This sequence belongs to the class-II pyridine nucleotide-disulfide oxidoreductase family. In terms of assembly, homodimer. The cofactor is FAD.

It localises to the cytoplasm. It carries out the reaction [thioredoxin]-dithiol + NADP(+) = [thioredoxin]-disulfide + NADPH + H(+). The polypeptide is Thioredoxin reductase (trxB) (Buchnera aphidicola subsp. Schizaphis graminum (strain Sg)).